The following is an 86-amino-acid chain: Co-chaperonin GroES (86 aa).

It belongs to the GroES chaperonin family. In terms of assembly, heptamer of 7 subunits arranged in a ring. Interacts with the chaperonin GroEL.

The protein localises to the cytoplasm. In terms of biological role, together with the chaperonin GroEL, plays an essential role in assisting protein folding. The GroEL-GroES system forms a nano-cage that allows encapsulation of the non-native substrate proteins and provides a physical environment optimized to promote and accelerate protein folding. GroES binds to the apical surface of the GroEL ring, thereby capping the opening of the GroEL channel. This chain is Co-chaperonin GroES, found in Campylobacter concisus (strain 13826).